The chain runs to 333 residues: Taste receptor type 2 member 38 (333 aa).

The Extracellular portion of the chain corresponds to 1–17 (MLTLTRICAVSYEVRST). Residues 18–38 (FLFISVLEFAVGFLTNAFIFL) traverse the membrane as a helical segment. The Cytoplasmic segment spans residues 39–55 (VNFWDVVKRQPLSNSDC). Residues 56-76 (VLLCLSISRLFLHGLLFLSAI) traverse the membrane as a helical segment. The Extracellular portion of the chain corresponds to 77 to 94 (QLTHFQKLSEPLNHSYQA). A helical transmembrane segment spans residues 95–115 (IIMLWIIANQANLWLAACLSL). Topologically, residues 116-142 (LYCSKLIRFSHTFLICLASWVSRKISQ) are cytoplasmic. The chain crosses the membrane as a helical span at residues 143 to 163 (MLLGIILCSCICTVLCVWCFF). Topologically, residues 164–190 (SRPHFTVTTFLFMNNNTRLNWQIKDLN) are extracellular. N-linked (GlcNAc...) asparagine glycosylation is present at Asn-178. Residues 191-211 (LFYSFLFCYLWSVPPFLLFLV) traverse the membrane as a helical segment. Residues 212–251 (SSGMLTVSLGRHMRTMKVYTRDSRDPSLEAHIKALKSLVS) are Cytoplasmic-facing. The chain crosses the membrane as a helical span at residues 252-272 (FFCFFVISSCAAFISVPLLIL). Residues 273-276 (WRNK) are Extracellular-facing. Residues 277 to 297 (IGVMVCVGIMAACPSGHAAVL) form a helical membrane-spanning segment. The Cytoplasmic segment spans residues 298 to 333 (ISGNATLRRAVTTILLWAQSSMKVRADHKADSRTLC).

It belongs to the G-protein coupled receptor T2R family.

It localises to the membrane. Functionally, receptor that may play a role in the perception of bitterness and is gustducin-linked. May play a role in sensing the chemical composition of the gastrointestinal content. The activity of this receptor may stimulate alpha gustducin, mediate PLC-beta-2 activation and lead to the gating of TRPM5. The polypeptide is Taste receptor type 2 member 38 (TAS2R38) (Pongo pygmaeus (Bornean orangutan)).